The sequence spans 422 residues: 4-hydroxy-3-methylbut-2-en-1-yl diphosphate synthase (flavodoxin) (422 aa).

[4Fe-4S] cluster contacts are provided by Cys316, Cys319, Cys362, and Glu369.

Belongs to the IspG family. The cofactor is [4Fe-4S] cluster.

The catalysed reaction is (2E)-4-hydroxy-3-methylbut-2-enyl diphosphate + oxidized [flavodoxin] + H2O + 2 H(+) = 2-C-methyl-D-erythritol 2,4-cyclic diphosphate + reduced [flavodoxin]. Its pathway is isoprenoid biosynthesis; isopentenyl diphosphate biosynthesis via DXP pathway; isopentenyl diphosphate from 1-deoxy-D-xylulose 5-phosphate: step 5/6. Its function is as follows. Converts 2C-methyl-D-erythritol 2,4-cyclodiphosphate (ME-2,4cPP) into 1-hydroxy-2-methyl-2-(E)-butenyl 4-diphosphate. The chain is 4-hydroxy-3-methylbut-2-en-1-yl diphosphate synthase (flavodoxin) from Anaplasma marginale (strain St. Maries).